The chain runs to 858 residues: GDP-fucose protein O-fucosyltransferase 2 (858 aa).

The Cytoplasmic segment spans residues 1-150; sequence MHCQLGGQAR…RPPCLLNHRR (150 aa). A helical; Signal-anchor for type II membrane protein membrane pass occupies residues 151–171; the sequence is LLLGLVSVLTVFLSCLPFTNA. The Lumenal portion of the chain corresponds to 172–858; sequence TVSPAALQDV…WPSLDPSSTL (687 aa). 237–241 is a binding site for GDP-beta-L-fucose; the sequence is GEGFH. Catalysis depends on E238, which acts as the Proton acceptor. A disordered region spans residues 448-510; that stretch reads AALTPQERQR…SRSRKEIQEE (63 aa). Residues 486-510 are compositionally biased toward basic and acidic residues; sequence DGEREKRKPGRRSDTSRSRKEIQEE. Residues 646 to 648 and 787 to 788 each bind GDP-beta-L-fucose; these read HLR and RF. Residues 819–858 are disordered; sequence TGGQAQGKCFATKSHDPPEGRSRSELRRKYWPSLDPSSTL. A compositionally biased stretch (basic and acidic residues) spans 831-846; that stretch reads KSHDPPEGRSRSELRR.

Belongs to the glycosyltransferase 68 family.

It localises to the endoplasmic reticulum membrane. The enzyme catalyses L-seryl-[protein] + GDP-beta-L-fucose = 3-O-(alpha-L-fucosyl)-L-seryl-[protein] + GDP + H(+). It carries out the reaction L-threonyl-[protein] + GDP-beta-L-fucose = 3-O-(alpha-L-fucosyl)-L-threonyl-[protein] + GDP + H(+). It functions in the pathway protein modification; protein glycosylation. Functionally, catalyzes the reaction that attaches fucose through an O-glycosidic linkage to a conserved serine or threonine residue in the consensus sequence C1-X-X-S/T-C2 of thrombospondin type I repeats (TSRs) where C1 and C2 are the first and second cysteines of the repeat, respectively. O-fucosylates microneme protein MIC2 and may play a role in its stabilization. Probably by regulating protein O-fucosylation, may play a role in tachyzoite adhesion to and/or invasion of host cells; however, POFUT2 involvement in adhesion/invasion is controversial. The polypeptide is GDP-fucose protein O-fucosyltransferase 2 (Toxoplasma gondii (strain ATCC 50853 / GT1)).